The chain runs to 244 residues: Orotidine 5'-phosphate decarboxylase (244 aa).

Residues Asp-12, Lys-34, 61-70, Thr-125, Arg-187, Gln-196, Gly-216, and Arg-217 contribute to the substrate site; that span reads DLKLFDIPNT. Residue Lys-63 is the Proton donor of the active site.

It belongs to the OMP decarboxylase family. Type 1 subfamily. As to quaternary structure, homodimer.

It carries out the reaction orotidine 5'-phosphate + H(+) = UMP + CO2. It participates in pyrimidine metabolism; UMP biosynthesis via de novo pathway; UMP from orotate: step 2/2. In terms of biological role, catalyzes the decarboxylation of orotidine 5'-monophosphate (OMP) to uridine 5'-monophosphate (UMP). This chain is Orotidine 5'-phosphate decarboxylase, found in Dictyoglomus thermophilum (strain ATCC 35947 / DSM 3960 / H-6-12).